We begin with the raw amino-acid sequence, 432 residues long: Neuropeptide FF receptor 1 (432 aa).

The Extracellular segment spans residues 1–43 (MEAEPSQPPNGSWPLGQNGSDVETSMATSLTFSSYYQHSSPVA). Residues asparagine 10 and asparagine 18 are each glycosylated (N-linked (GlcNAc...) asparagine). A helical transmembrane segment spans residues 44–64 (AMFIAAYVLIFLLCMVGNTLV). The Cytoplasmic portion of the chain corresponds to 65–80 (CFIVLKNRHMRTVTNM). The helical transmembrane segment at 81-101 (FILNLAVSDLLVGIFCMPTTL) threads the bilayer. Topologically, residues 102 to 117 (VDNLITGWPFDNATCK) are extracellular. Asparagine 113 carries an N-linked (GlcNAc...) asparagine glycan. Cysteines 116 and 203 form a disulfide. A helical transmembrane segment spans residues 118 to 138 (MSGLVQGMSVSASVFTLVAIA). The Cytoplasmic portion of the chain corresponds to 139 to 158 (VERFRCIVHPFREKLTLRKA). Residues 159-179 (LFTIAVIWALALLIMCPSAVT) form a helical membrane-spanning segment. Topologically, residues 180–214 (LTVTREEHHFMLDARNRSYPLYSCWEAWPEKGMRK) are extracellular. An N-linked (GlcNAc...) asparagine glycan is attached at asparagine 195. A helical transmembrane segment spans residues 215 to 235 (VYTAVLFAHIYLVPLALIVVM). Over 236–273 (YVRIARKLCQAPGPARDTEEAVAEGGRTSRRRARVVHM) the chain is Cytoplasmic. The helical transmembrane segment at 274–294 (LVMVALFFTLSWLPLWVLLLL) threads the bilayer. Topologically, residues 295-309 (IDYGELSELQLHLLS) are extracellular. A helical membrane pass occupies residues 310–330 (VYAFPLAHWLAFFHSSANPII). Over 331-432 (YGYFNENFRR…MPLTIPAWNI (102 aa)) the chain is Cytoplasmic. Positions 380 to 406 (PSDSGLPSESGPSSGVPGPGRLPLRNG) are enriched in low complexity. The disordered stretch occupies residues 380-422 (PSDSGLPSESGPSSGVPGPGRLPLRNGRVAHQDGPGEGPGCNH).

The protein belongs to the G-protein coupled receptor 1 family. As to expression, expressed at high levels in the hypothalamus. Moderate levels found in the midbrain, thalamus, medulla oblongata, testis, eye, whole brain, cerebral cortex, striatum, hippocampus, cerebellum, optic nerve, placenta, spinal cord, pituitary gland and ovary.

The protein localises to the cell membrane. In terms of biological role, receptor for NPAF (A-18-F-amide) and NPFF (F-8-F-amide) neuropeptides, also known as morphine-modulating peptides. Can also be activated by a variety of naturally occurring or synthetic FMRF-amide like ligands. This receptor mediates its action by association with G proteins that activate a phosphatidylinositol-calcium second messenger system. This chain is Neuropeptide FF receptor 1 (Npffr1), found in Rattus norvegicus (Rat).